The sequence spans 377 residues: Gap junction gamma-1 protein (377 aa).

The Cytoplasmic segment spans residues 1–18 (MSWSFLTRLLEEINNHST). The chain crosses the membrane as a helical span at residues 19 to 39 (FVGKVWLTVLIIFRIVLTAVG). Over 40-75 (GESIYYDEQSKFTCNTQQPGCENVCYDAFAPLSHVR) the chain is Extracellular. The chain crosses the membrane as a helical span at residues 76-96 (FWVFQIILITTPSIMYLGFAM). Residues 97–174 (HRIARQPEMQ…RRIKQDGLMK (78 aa)) lie on the Cytoplasmic side of the membrane. Residues 129 to 163 (DYEEAEDNQEEDPMICEEEEPEKDSEKGDKKKHDG) are disordered. Residues 131-151 (EEAEDNQEEDPMICEEEEPEK) are compositionally biased toward acidic residues. A helical membrane pass occupies residues 175–197 (VYVLQLLFRSVFEVGFLMGQYIL). Residues 198-228 (YGFEVIPFFVCSRKPCPHTVDCFVSRPTEKT) are Extracellular-facing. Residues 229–249 (IFLLIMYAVSALCLFLNLCEL) traverse the membrane as a helical segment. Residues 250-377 (FHLGIGGIRD…GVGNREKSGL (128 aa)) are Cytoplasmic-facing. Disordered regions lie at residues 265-294 (KKELQESRKKTPSAPPNYHSVLKKGRLPNG) and 334-377 (LNPT…KSGL). The span at 337-362 (TGDNTHASRSSSPESNSIAAEQNRLN) shows a compositional bias: polar residues.

It belongs to the connexin family. Gamma-type subfamily. In terms of assembly, a connexon is composed of a hexamer of connexins.

Its subcellular location is the cell membrane. The protein resides in the cell junction. The protein localises to the gap junction. In terms of biological role, one gap junction consists of a cluster of closely packed pairs of transmembrane channels, the connexons, through which materials of low MW diffuse from one cell to a neighboring cell. This is Gap junction gamma-1 protein (gjc1) from Xenopus tropicalis (Western clawed frog).